A 776-amino-acid chain; its full sequence is Microtubule-associated protein tau (776 aa).

Residues 1-26 (MAEPRQEFEVMEDHAGTYGLGDRKDQ) are compositionally biased toward basic and acidic residues. Disordered stretches follow at residues 1 to 263 (MAEP…PAKG) and 276 to 591 (STEI…LKNV). The residue at position 2 (Ala-2) is an N-acetylalanine. Phosphotyrosine is present on residues Tyr-18 and Tyr-29. Lys-44 participates in a covalent cross-link: Glycyl lysine isopeptide (Lys-Gly) (interchain with G-Cter in ubiquitin). Phosphoserine occurs at positions 46 and 61. The span at 61–71 (SETSDAKSTPT) shows a compositional bias: polar residues. A phosphothreonine mark is found at Thr-69, Thr-71, and Thr-111. Composition is skewed to basic and acidic residues over residues 179–189 (EGGRHAPELLK) and 207–216 (GGKERPGSKE). Ser-214 bears the Phosphoserine mark. The segment covering 217-228 (EVDEDRDVDESS) has biased composition (acidic residues). Residues 314 to 323 (EQAHSEEHLG) are compositionally biased toward basic and acidic residues. Low complexity predominate over residues 324–340 (RAAFPGAPGEGPEARGP). Composition is skewed to basic and acidic residues over residues 344–356 (EDTKEADLPESSE) and 381–393 (KSKDGTGSDDKKA). Over residues 440 to 452 (KYVSSVTPRTGSS) the composition is skewed to polar residues. The span at 455–466 (KEMKLKGADGKT) shows a compositional bias: basic and acidic residues. The residue at position 470 (Thr-470) is a Phosphothreonine. Arg-472 carries the post-translational modification Omega-N-methylarginine. Lys-480 bears the N6,N6-dimethyllysine; alternate mark. Lys-480 is subject to N6-acetyllysine; alternate. A phosphothreonine mark is found at Thr-486, Thr-492, and Thr-498. Phosphoserine is present on residues Ser-502, Ser-526, and Ser-530. A compositionally biased stretch (basic and acidic residues) spans 517-528 (RSERGEPPKSGD). Residues 529–549 (RSGYSSPGSPGTPGSRSRTPS) show a composition bias toward low complexity. Tyr-532 is modified (phosphotyrosine). Phosphoserine is present on residues Ser-533, Ser-534, and Ser-537. Thr-540 and Thr-547 each carry phosphothreonine. A Phosphoserine modification is found at Ser-549. Thr-552 is subject to Phosphothreonine. An N6-acetyllysine modification is found at Lys-560. Thr-566 carries the post-translational modification Phosphothreonine. Residues Ser-570 and Ser-572 each carry the phosphoserine modification. 4 Tau/MAP repeats span residues 579–609 (QTAPVPMPDLKNVKSKIGSTENLKHQPGGGK), 610–640 (VQIINKKLDLSNVQSKCGSKDNIKHVPGGGS), 641–671 (VQIVYKPVDLSKVTSKCGSLGNIHHKPGGGQ), and 672–703 (VEVKSEKLDFKDRVQSKIGSLDNITHVPGGGN). Lys-589 participates in a covalent cross-link: Glycyl lysine isopeptide (Lys-Gly) (interchain with G-Cter in ubiquitin). An N6-acetyllysine; alternate modification is found at Lys-594. Residue Lys-594 is modified to N6-methyllysine; alternate. Lys-594 is covalently cross-linked (Glycyl lysine isopeptide (Lys-Gly) (interchain with G-Cter in ubiquitin); alternate). A Phosphoserine modification is found at Ser-597. Lys-602 participates in a covalent cross-link: Glycyl lysine isopeptide (Lys-Gly) (interchain with G-Cter in ubiquitin). Lys-616 is modified (N6-acetyllysine; alternate). Residue Lys-616 forms a Glycyl lysine isopeptide (Lys-Gly) (interchain with G-Cter in ubiquitin); alternate linkage. Residues Ser-620 and Ser-624 each carry the phosphoserine modification. N6-acetyllysine is present on Lys-625. Ser-628 bears the Phosphoserine mark. Lys-633 carries the post-translational modification N6-acetyllysine; alternate. A Glycyl lysine isopeptide (Lys-Gly) (interchain with G-Cter in ubiquitin); alternate cross-link involves residue Lys-633. Ser-640 carries the phosphoserine modification. Residue Lys-646 is modified to N6,N6-dimethyllysine; alternate. 3 positions are modified to N6-acetyllysine; alternate: Lys-646, Lys-652, and Lys-656. Residues Lys-646, Lys-652, and Lys-656 each participate in a glycyl lysine isopeptide (Lys-Gly) (interchain with G-Cter in ubiquitin); alternate cross-link. Phosphoserine is present on Ser-659. N6-acetyllysine; alternate is present on residues Lys-666, Lys-678, and Lys-682. Glycyl lysine isopeptide (Lys-Gly) (interchain with G-Cter in ubiquitin); alternate cross-links involve residues Lys-666, Lys-678, and Lys-682. The residue at position 684 (Arg-684) is an Omega-N-methylarginine. Ser-687 is modified (phosphoserine). Residue Lys-688 forms a Glycyl lysine isopeptide (Lys-Gly) (interchain with G-Cter in ubiquitin) linkage. Ser-691 carries the phosphoserine modification. Residue Lys-704 is modified to N6-acetyllysine; alternate. Lys-704 participates in a covalent cross-link: Glycyl lysine isopeptide (Lys-Gly) (interchain with G-Cter in ubiquitin); alternate. Lys-710 participates in a covalent cross-link: Glycyl lysine isopeptide (Lys-Gly) (interchain with G-Cter in ubiquitin). Lys-720 is subject to N6-acetyllysine; alternate. A Glycyl lysine isopeptide (Lys-Gly) (interchain with G-Cter in ubiquitin); alternate cross-link involves residue Lys-720. Position 729 is a phosphotyrosine (Tyr-729). Phosphoserine occurs at positions 731 and 735. The interval 733–752 (VVSGDTSPRHLSNVSSTGSI) is disordered. The segment covering 736–751 (GDTSPRHLSNVSSTGS) has biased composition (polar residues). Thr-738 carries the phosphothreonine modification. Ser-739, Ser-744, Ser-751, and Ser-757 each carry phosphoserine. The residue at position 762 (Thr-762) is a Phosphothreonine.

In terms of assembly, interacts with MARK1, MARK2, MARK3 and MARK4. Interacts with SQSTM1 when polyubiquitinated. Interacts with PSMC2 through SQSTM1. Interacts with FKBP4. Binds to CSNK1D. Interacts with SGK1. Interacts with EPM2A; the interaction dephosphorylates MAPT at Ser-396. Interacts with PIN1. Interacts with LRRK2. Interacts with LRP1, leading to endocytosis; this interaction is reduced in the presence of LRPAP1/RAP. Post-translationally, polyubiquitinated. Requires functional TRAF6 and may provoke SQSTM1-dependent degradation by the proteasome. In terms of processing, phosphorylation at various serine and threonine residues in S-P or T-P motifs by proline-directed protein kinases (PDPK1, CDK1, CDK5, GSK3, MAPK) (a few sites per protein in interphase, more in mitosis), and at serine residues in K-X-G-S motifs by MAP/microtubule affinity-regulating kinase (MARK1, MARK2, MARK3 or MARK4), causing detachment from microtubules, and their disassembly. Phosphorylation at Ser-597 by BRSK1 and BRSK2 in neurons affects ability to bind microtubules and plays a role in neuron polarization. Phosphorylation at Ser-214 by SGK1 mediates microtubule depolymerization and neurite formation in hippocampal neurons. Phosphorylated by PHK. Dephosphorylation at several serine and threonine residues by the serine/threonine phosphatase PPP5C.

The protein resides in the cytoplasm. The protein localises to the cytosol. Its subcellular location is the cell membrane. It is found in the cytoskeleton. It localises to the cell projection. The protein resides in the axon. The protein localises to the dendrite. In terms of biological role, promotes microtubule assembly and stability, and might be involved in the establishment and maintenance of neuronal polarity. The C-terminus binds axonal microtubules while the N-terminus binds neural plasma membrane components, suggesting that tau functions as a linker protein between both. Axonal polarity is predetermined by tau localization (in the neuronal cell) in the domain of the cell body defined by the centrosome. The short isoforms allow plasticity of the cytoskeleton whereas the longer isoforms may preferentially play a role in its stabilization. The sequence is that of Microtubule-associated protein tau (MAPT) from Gorilla gorilla gorilla (Western lowland gorilla).